A 378-amino-acid polypeptide reads, in one-letter code: Ribosomal RNA large subunit methyltransferase G (378 aa).

This sequence belongs to the methyltransferase superfamily. RlmG family.

It localises to the cytoplasm. It carries out the reaction guanosine(1835) in 23S rRNA + S-adenosyl-L-methionine = N(2)-methylguanosine(1835) in 23S rRNA + S-adenosyl-L-homocysteine + H(+). In terms of biological role, specifically methylates the guanine in position 1835 (m2G1835) of 23S rRNA. In Salmonella gallinarum (strain 287/91 / NCTC 13346), this protein is Ribosomal RNA large subunit methyltransferase G.